A 186-amino-acid polypeptide reads, in one-letter code: Inner membrane-spanning protein YciB (186 aa).

6 helical membrane-spanning segments follow: residues 3–23 (FLFD…AGIY), 24–44 (VATT…WFKH), 49–69 (AMQW…LIFH), 76–96 (WKPT…AVLL), 121–141 (LVWS…AYHF), and 149–169 (FKLF…SVWL).

It belongs to the YciB family.

Its subcellular location is the cell inner membrane. Its function is as follows. Plays a role in cell envelope biogenesis, maintenance of cell envelope integrity and membrane homeostasis. The sequence is that of Inner membrane-spanning protein YciB from Ralstonia nicotianae (strain ATCC BAA-1114 / GMI1000) (Ralstonia solanacearum).